A 309-amino-acid polypeptide reads, in one-letter code: Methionyl-tRNA formyltransferase (309 aa).

(6S)-5,6,7,8-tetrahydrofolate is bound at residue 112–115 (SLLP).

Belongs to the Fmt family.

It catalyses the reaction L-methionyl-tRNA(fMet) + (6R)-10-formyltetrahydrofolate = N-formyl-L-methionyl-tRNA(fMet) + (6S)-5,6,7,8-tetrahydrofolate + H(+). Its function is as follows. Attaches a formyl group to the free amino group of methionyl-tRNA(fMet). The formyl group appears to play a dual role in the initiator identity of N-formylmethionyl-tRNA by promoting its recognition by IF2 and preventing the misappropriation of this tRNA by the elongation apparatus. This chain is Methionyl-tRNA formyltransferase, found in Bartonella quintana (strain Toulouse) (Rochalimaea quintana).